Reading from the N-terminus, the 214-residue chain is uncharacterized protein (214 aa).

The signal sequence occupies residues 1–24; that stretch reads MVTPHGILLLTITAAASLLWITFA. A disordered region spans residues 99–121; it reads APNDTQEQNSTRNKRDSESYTAT. The span at 100 to 109 shows a compositional bias: polar residues; that stretch reads PNDTQEQNST.

Component of the acid-insoluble and acid-soluble organic matrix of the aragonitic skeleton (at protein level).

The protein resides in the secreted. This is an uncharacterized protein from Acropora millepora (Staghorn coral).